A 450-amino-acid polypeptide reads, in one-letter code: Tubulin alpha-5 chain (450 aa).

Residues Gln-11, Glu-71, Gly-144, Thr-145, Thr-179, Asn-206, and Asn-228 each coordinate GTP. Glu-71 provides a ligand contact to Mg(2+). The active site involves Glu-254. Residue Thr-349 is modified to Phosphothreonine. The interval 429 to 450 (EKDYEEVGAEGGDDEEDEGEDY) is disordered. Residues 431–450 (DYEEVGAEGGDDEEDEGEDY) show a composition bias toward acidic residues.

Belongs to the tubulin family. As to quaternary structure, dimer of alpha and beta chains. A typical microtubule is a hollow water-filled tube with an outer diameter of 25 nm and an inner diameter of 15 nM. Alpha-beta heterodimers associate head-to-tail to form protofilaments running lengthwise along the microtubule wall with the beta-tubulin subunit facing the microtubule plus end conferring a structural polarity. Microtubules usually have 13 protofilaments but different protofilament numbers can be found in some organisms and specialized cells. Mg(2+) is required as a cofactor. Undergoes a tyrosination/detyrosination cycle, the cyclic removal and re-addition of a C-terminal tyrosine residue by the enzymes tubulin tyrosine carboxypeptidase (TTCP) and tubulin tyrosine ligase (TTL), respectively.

The protein resides in the cytoplasm. It localises to the cytoskeleton. It carries out the reaction GTP + H2O = GDP + phosphate + H(+). Tubulin is the major constituent of microtubules, a cylinder consisting of laterally associated linear protofilaments composed of alpha- and beta-tubulin heterodimers. Microtubules grow by the addition of GTP-tubulin dimers to the microtubule end, where a stabilizing cap forms. Below the cap, tubulin dimers are in GDP-bound state, owing to GTPase activity of alpha-tubulin. The sequence is that of Tubulin alpha-5 chain (TUBA5) from Arabidopsis thaliana (Mouse-ear cress).